Consider the following 457-residue polypeptide: Fibrinogen C domain-containing protein 1-A (457 aa).

The tract at residues 1–20 is disordered; it reads MGSDRWKNIGGTPQMEDSAQ. At 1–33 the chain is on the cytoplasmic side; sequence MGSDRWKNIGGTPQMEDSAQEKTQRKGCGYILC. A helical; Signal-anchor for type II membrane protein membrane pass occupies residues 34 to 54; that stretch reads TVLLSVAVLLAVTVTGAVLFM. Residues 55-457 lie on the Extracellular side of the membrane; it reads NHYHAPSTEP…MKIRPQREEN (403 aa). A disordered region spans residues 216–235; the sequence is ADLQRAPSRNSRPRGCANGS. In terms of domain architecture, Fibrinogen C-terminal spans 231–454; sequence CANGSKPRDC…FTEMKIRPQR (224 aa). A glycan (N-linked (GlcNAc...) asparagine) is linked at Asn-233. Cysteines 240 and 269 form a disulfide. Residue Asn-336 is glycosylated (N-linked (GlcNAc...) asparagine). Residues Asp-389 and Asp-391 each coordinate Ca(2+). Cys-397 and Cys-410 form a disulfide bridge.

In terms of assembly, homotetramer; disulfide-linked.

It is found in the membrane. Its function is as follows. Acetyl group-binding receptor which shows a calcium-dependent binding to acetylated structures such as chitin, some N-acetylated carbohydrates, and amino acids. The sequence is that of Fibrinogen C domain-containing protein 1-A (fibcd1-a) from Xenopus laevis (African clawed frog).